Reading from the N-terminus, the 367-residue chain is tRNA 2-selenouridine synthase (367 aa).

The region spanning 15 to 138 is the Rhodanese domain; it reads FLQARPLIDV…LRTFLIQILE (124 aa). C98 acts as the S-selanylcysteine intermediate in catalysis.

It belongs to the SelU family. In terms of assembly, monomer.

It catalyses the reaction 5-methylaminomethyl-2-thiouridine(34) in tRNA + selenophosphate + (2E)-geranyl diphosphate + H2O + H(+) = 5-methylaminomethyl-2-selenouridine(34) in tRNA + (2E)-thiogeraniol + phosphate + diphosphate. The enzyme catalyses 5-methylaminomethyl-2-thiouridine(34) in tRNA + (2E)-geranyl diphosphate = 5-methylaminomethyl-S-(2E)-geranyl-thiouridine(34) in tRNA + diphosphate. The catalysed reaction is 5-methylaminomethyl-S-(2E)-geranyl-thiouridine(34) in tRNA + selenophosphate + H(+) = 5-methylaminomethyl-2-(Se-phospho)selenouridine(34) in tRNA + (2E)-thiogeraniol. It carries out the reaction 5-methylaminomethyl-2-(Se-phospho)selenouridine(34) in tRNA + H2O = 5-methylaminomethyl-2-selenouridine(34) in tRNA + phosphate. Functionally, involved in the post-transcriptional modification of the uridine at the wobble position (U34) of tRNA(Lys), tRNA(Glu) and tRNA(Gln). Catalyzes the conversion of 2-thiouridine (S2U-RNA) to 2-selenouridine (Se2U-RNA). Acts in a two-step process involving geranylation of 2-thiouridine (S2U) to S-geranyl-2-thiouridine (geS2U) and subsequent selenation of the latter derivative to 2-selenouridine (Se2U) in the tRNA chain. This chain is tRNA 2-selenouridine synthase, found in Shewanella denitrificans (strain OS217 / ATCC BAA-1090 / DSM 15013).